Consider the following 274-residue polypeptide: MQIVTSPSELRALRREWKGTVGFVPTMGALHKGHLTLIQKSKAQNEKSIVSIFVNPTQFGENEDFAHYPRKPEADANICQKAGVDILFMPKAEDIYFEGDEVLLKAPQKSGFVLEGAARPGHFDGVLRVVLKLLHLTSPTRAYFGQKDTQQLLLIQKMARELFLPYEIVPCPTERDSDGLALSSRNAYLSEAEKKEALKISASLKEATKHIMTGELQSSQIKERALKVLEGVEVEYFEIVDRNLMPLERIIKGETIILVTARVGKVRLLDNLWI.

27–34 (MGALHKGH) contributes to the ATP binding site. His-34 (proton donor) is an active-site residue. Gln-58 contributes to the (R)-pantoate binding site. Gln-58 is a binding site for beta-alanine. 145 to 148 (GQKD) contributes to the ATP binding site. Position 151 (Gln-151) interacts with (R)-pantoate. Residue 182–185 (LSSR) coordinates ATP.

Belongs to the pantothenate synthetase family. In terms of assembly, homodimer.

The protein resides in the cytoplasm. The catalysed reaction is (R)-pantoate + beta-alanine + ATP = (R)-pantothenate + AMP + diphosphate + H(+). The protein operates within cofactor biosynthesis; (R)-pantothenate biosynthesis; (R)-pantothenate from (R)-pantoate and beta-alanine: step 1/1. Functionally, catalyzes the condensation of pantoate with beta-alanine in an ATP-dependent reaction via a pantoyl-adenylate intermediate. The polypeptide is Pantothenate synthetase (Wolinella succinogenes (strain ATCC 29543 / DSM 1740 / CCUG 13145 / JCM 31913 / LMG 7466 / NCTC 11488 / FDC 602W) (Vibrio succinogenes)).